Consider the following 172-residue polypeptide: MNKLSSSAITTTWLAMIIIVLDQVTKYWANTSLTMGEPVAILPHLNLTLVYNYGAAFSFLSEVGGWQRWFFTALALVVGTALVIWLAKLPKRWTLEVVAINLVLSGAIGNVIDRILAGRVTDFVDFYIGSWHYATFNVADMGISIGAVLLIISEFWLKPRHEKKAHSTEESV.

4 helical membrane passes run 4 to 24 (LSSS…LDQV), 39 to 59 (VAIL…AFSF), 69 to 89 (WFFT…LAKL), and 93 to 113 (WTLE…NVID). Active-site residues include D122 and D140. Residues 136–156 (FNVADMGISIGAVLLIISEFW) traverse the membrane as a helical segment.

It belongs to the peptidase A8 family.

The protein localises to the cell inner membrane. The enzyme catalyses Release of signal peptides from bacterial membrane prolipoproteins. Hydrolyzes -Xaa-Yaa-Zaa-|-(S,diacylglyceryl)Cys-, in which Xaa is hydrophobic (preferably Leu), and Yaa (Ala or Ser) and Zaa (Gly or Ala) have small, neutral side chains.. Its pathway is protein modification; lipoprotein biosynthesis (signal peptide cleavage). Its function is as follows. This protein specifically catalyzes the removal of signal peptides from prolipoproteins. The sequence is that of Lipoprotein signal peptidase from Hydrogenovibrio crunogenus (strain DSM 25203 / XCL-2) (Thiomicrospira crunogena).